The following is a 333-amino-acid chain: Protoheme IX farnesyltransferase (333 aa).

A run of 8 helical transmembrane segments spans residues 63 to 83 (LACT…LNCI), 109 to 129 (AAFI…VSGV), 132 to 152 (LAAG…TAIL), 160 to 180 (IVIG…AASG), 188 to 208 (WLFS…ALLL), 214 to 234 (AVGI…RAIS), 245 to 265 (GFGV…LIPF), and 292 to 312 (WSIF…LPMA).

This sequence belongs to the UbiA prenyltransferase family. Protoheme IX farnesyltransferase subfamily.

The protein localises to the cell inner membrane. It catalyses the reaction heme b + (2E,6E)-farnesyl diphosphate + H2O = Fe(II)-heme o + diphosphate. It participates in porphyrin-containing compound metabolism; heme O biosynthesis; heme O from protoheme: step 1/1. Converts heme B (protoheme IX) to heme O by substitution of the vinyl group on carbon 2 of heme B porphyrin ring with a hydroxyethyl farnesyl side group. The sequence is that of Protoheme IX farnesyltransferase from Prochlorococcus marinus (strain MIT 9313).